Here is a 343-residue protein sequence, read N- to C-terminus: Glutamine synthetase (343 aa).

The GS beta-grasp domain occupies 3-87 (FKAEYIWIDG…CEVLNIDLTP (85 aa)). Positions 92-343 (TRAALAEVAE…CSALEKAGQV (252 aa)) constitute a GS catalytic domain. Mg(2+) is bound by residues E113, E115, E174, and E181. E279 lines the L-glutamate pocket.

Belongs to the glutamine synthetase family. In terms of assembly, homooctamer and homotetramer. Mg(2+) is required as a cofactor.

It localises to the cytoplasm. The enzyme catalyses L-glutamate + NH4(+) + ATP = L-glutamine + ADP + phosphate + H(+). Its function is as follows. Catalyzes the ATP-dependent biosynthesis of glutamine from glutamate and ammonia. In Streptomyces viridochromogenes, this protein is Glutamine synthetase.